The following is a 305-amino-acid chain: Protein FdhE homolog (305 aa).

The protein belongs to the FdhE family.

The protein localises to the cytoplasm. Its function is as follows. Necessary for formate dehydrogenase activity. The sequence is that of Protein FdhE homolog from Haemophilus ducreyi (strain 35000HP / ATCC 700724).